The following is a 743-amino-acid chain: 1,4-alpha-glucan branching enzyme GlgB (743 aa).

The active-site Nucleophile is aspartate 416. The active-site Proton donor is glutamate 469.

The protein belongs to the glycosyl hydrolase 13 family. GlgB subfamily. As to quaternary structure, monomer.

It carries out the reaction Transfers a segment of a (1-&gt;4)-alpha-D-glucan chain to a primary hydroxy group in a similar glucan chain.. It participates in glycan biosynthesis; glycogen biosynthesis. Catalyzes the formation of the alpha-1,6-glucosidic linkages in glycogen by scission of a 1,4-alpha-linked oligosaccharide from growing alpha-1,4-glucan chains and the subsequent attachment of the oligosaccharide to the alpha-1,6 position. This chain is 1,4-alpha-glucan branching enzyme GlgB, found in Shewanella baltica (strain OS185).